A 309-amino-acid polypeptide reads, in one-letter code: Homoserine kinase (309 aa).

91–101 contacts ATP; it reads PIGSGLGSSAC.

The protein belongs to the GHMP kinase family. Homoserine kinase subfamily.

The protein localises to the cytoplasm. It catalyses the reaction L-homoserine + ATP = O-phospho-L-homoserine + ADP + H(+). It participates in amino-acid biosynthesis; L-threonine biosynthesis; L-threonine from L-aspartate: step 4/5. Its function is as follows. Catalyzes the ATP-dependent phosphorylation of L-homoserine to L-homoserine phosphate. The chain is Homoserine kinase from Buchnera aphidicola subsp. Schizaphis graminum (strain Sg).